A 201-amino-acid polypeptide reads, in one-letter code: Cytochrome c biogenesis ATP-binding export protein CcmA (201 aa).

The ABC transporter domain maps to 3–200 (LIAENLGGER…EGAELRMGVA (198 aa)). Position 35-42 (35-42 (GPNGSGKS)) interacts with ATP.

The protein belongs to the ABC transporter superfamily. CcmA exporter (TC 3.A.1.107) family. As to quaternary structure, the complex is composed of two ATP-binding proteins (CcmA) and two transmembrane proteins (CcmB).

It is found in the cell inner membrane. It catalyses the reaction heme b(in) + ATP + H2O = heme b(out) + ADP + phosphate + H(+). Functionally, part of the ABC transporter complex CcmAB involved in the biogenesis of c-type cytochromes; once thought to export heme, this seems not to be the case, but its exact role is uncertain. Responsible for energy coupling to the transport system. This Mesorhizobium japonicum (strain LMG 29417 / CECT 9101 / MAFF 303099) (Mesorhizobium loti (strain MAFF 303099)) protein is Cytochrome c biogenesis ATP-binding export protein CcmA.